We begin with the raw amino-acid sequence, 437 residues long: GTPase Obg (437 aa).

One can recognise an Obg domain in the interval 2-160 (SMFLDTAKIS…RQLELELKIL (159 aa)). The 178-residue stretch at 161–338 (ADVGLVGFPS…LLEATAELLA (178 aa)) folds into the OBG-type G domain. GTP is bound by residues 167-174 (GFPSVGKS), 192-196 (FTTIV), 214-217 (DLPG), 284-287 (NKMD), and 319-321 (SSL). Residues Ser174 and Thr194 each contribute to the Mg(2+) site. The region spanning 359–437 (GFAETEKDFE…IGKFEFEFVD (79 aa)) is the OCT domain.

This sequence belongs to the TRAFAC class OBG-HflX-like GTPase superfamily. OBG GTPase family. Monomer. Mg(2+) is required as a cofactor.

It localises to the cytoplasm. In terms of biological role, an essential GTPase which binds GTP, GDP and possibly (p)ppGpp with moderate affinity, with high nucleotide exchange rates and a fairly low GTP hydrolysis rate. Plays a role in control of the cell cycle, stress response, ribosome biogenesis and in those bacteria that undergo differentiation, in morphogenesis control. The protein is GTPase Obg of Streptococcus pyogenes serotype M5 (strain Manfredo).